The primary structure comprises 130 residues: UPF0225 protein CE1570 (130 aa).

The protein belongs to the UPF0225 family.

This chain is UPF0225 protein CE1570, found in Corynebacterium efficiens (strain DSM 44549 / YS-314 / AJ 12310 / JCM 11189 / NBRC 100395).